The following is a 265-amino-acid chain: Eukaryotic translation initiation factor 3 subunit J (265 aa).

Composition is skewed to acidic residues over residues 1–12 and 26–44; these read MAPERWDDEEDS and DEEEDEVLDSWDAAEDSEV. Disordered stretches follow at residues 1–113 and 212–265; these read MAPE…DADL and TMSN…DDFM. Basic and acidic residues-rich tracts occupy residues 45 to 65 and 73 to 86; these read EREKAAKAAEAKAKADAEAAA and RIQEHKEERKKKAE. The stretch at 61–95 forms a coiled coil; the sequence is AEAAAKKKSKSQRIQEHKEERKKKAEEEDSDSEEE. The span at 87–97 shows a compositional bias: acidic residues; that stretch reads EEDSDSEEEDD. Basic and acidic residues predominate over residues 216–228; that stretch reads EKMREERAADKGS. Positions 251–265 are enriched in acidic residues; it reads DYDNGDDGLGDDDFM.

This sequence belongs to the eIF-3 subunit J family. Component of the eukaryotic translation initiation factor 3 (eIF-3) complex.

It localises to the cytoplasm. In terms of biological role, component of the eukaryotic translation initiation factor 3 (eIF-3) complex, which is involved in protein synthesis of a specialized repertoire of mRNAs and, together with other initiation factors, stimulates binding of mRNA and methionyl-tRNAi to the 40S ribosome. The eIF-3 complex specifically targets and initiates translation of a subset of mRNAs involved in cell proliferation. The sequence is that of Eukaryotic translation initiation factor 3 subunit J (hcr1) from Aspergillus oryzae (strain ATCC 42149 / RIB 40) (Yellow koji mold).